The chain runs to 476 residues: Ribulose bisphosphate carboxylase large chain (476 aa).

Residues Asn124 and Thr174 each coordinate substrate. The active-site Proton acceptor is Lys176. Lys178 provides a ligand contact to substrate. The Mg(2+) site is built by Lys202, Asp204, and Glu205. Lys202 bears the N6-carboxylysine mark. Catalysis depends on His295, which acts as the Proton acceptor. The substrate site is built by Arg296, His328, and Ser380.

The protein belongs to the RuBisCO large chain family. Type I subfamily. Heterohexadecamer of 8 large chains and 8 small chains; disulfide-linked. The disulfide link is formed within the large subunit homodimers. It depends on Mg(2+) as a cofactor. The disulfide bond which can form in the large chain dimeric partners within the hexadecamer appears to be associated with oxidative stress and protein turnover.

Its subcellular location is the carboxysome. The enzyme catalyses 2 (2R)-3-phosphoglycerate + 2 H(+) = D-ribulose 1,5-bisphosphate + CO2 + H2O. The catalysed reaction is D-ribulose 1,5-bisphosphate + O2 = 2-phosphoglycolate + (2R)-3-phosphoglycerate + 2 H(+). Its function is as follows. RuBisCO catalyzes two reactions: the carboxylation of D-ribulose 1,5-bisphosphate, the primary event in carbon dioxide fixation, as well as the oxidative fragmentation of the pentose substrate in the photorespiration process. Both reactions occur simultaneously and in competition at the same active site. The sequence is that of Ribulose bisphosphate carboxylase large chain from Cyanothece sp. (strain PCC 7425 / ATCC 29141).